The sequence spans 380 residues: Ribosomal RNA large subunit methyltransferase F (380 aa).

The tract at residues Met1–Lys32 is disordered.

Belongs to the methyltransferase superfamily. METTL16/RlmF family.

The protein resides in the cytoplasm. The catalysed reaction is adenosine(1618) in 23S rRNA + S-adenosyl-L-methionine = N(6)-methyladenosine(1618) in 23S rRNA + S-adenosyl-L-homocysteine + H(+). Functionally, specifically methylates the adenine in position 1618 of 23S rRNA. This is Ribosomal RNA large subunit methyltransferase F from Shewanella halifaxensis (strain HAW-EB4).